Here is a 349-residue protein sequence, read N- to C-terminus: MKKSSLALMMMGLIASSATQAAEVYNKNGNKLDVYGKVKAMHYMSDYDSKDGDQTYVRFGIKGETQINDDLTGYGRWESEFSGNKTESDSSQKTRLAFAGVKVKNYGSFDYGRNLGALYDVEAWTDMFPEFGGDSSAQTDNFMTKRASGLATYRNTDFFGVVDGLDLTLQYQGKNEGREAKKQNGDGFGTSLSYDFGGSDFAVSAAYTSSDRTNDQNLLARGAKKAEAWATGLKYDANNIYLATMYSETRKMTPISGGFANKAQNFEAVAQYQFDFGLRPSLGYVLSKGKDIEGVGSEDLVNYIDVGVTYYFNKNMNAFVDYKINQLKSDNKLGINDDDIVAVGMTYQF.

A signal peptide spans 1 to 21; the sequence is MKKSSLALMMMGLIASSATQA.

This sequence belongs to the Gram-negative porin family. In terms of assembly, homotrimer.

It localises to the cell outer membrane. Functionally, uptake of inorganic phosphate, phosphorylated compounds, and some other negatively charged solutes. The sequence is that of Outer membrane porin PhoE (phoE) from Klebsiella oxytoca.